A 427-amino-acid chain; its full sequence is Gamma-glutamyl phosphate reductase (427 aa).

This sequence belongs to the gamma-glutamyl phosphate reductase family.

It is found in the cytoplasm. It catalyses the reaction L-glutamate 5-semialdehyde + phosphate + NADP(+) = L-glutamyl 5-phosphate + NADPH + H(+). Its pathway is amino-acid biosynthesis; L-proline biosynthesis; L-glutamate 5-semialdehyde from L-glutamate: step 2/2. In terms of biological role, catalyzes the NADPH-dependent reduction of L-glutamate 5-phosphate into L-glutamate 5-semialdehyde and phosphate. The product spontaneously undergoes cyclization to form 1-pyrroline-5-carboxylate. The sequence is that of Gamma-glutamyl phosphate reductase from Brucella canis (strain ATCC 23365 / NCTC 10854 / RM-666).